A 228-amino-acid chain; its full sequence is UPF0056 membrane protein MJ0972 (228 aa).

5 helical membrane passes run 22–42 (FYIYGFVSLFITIDPIGLIPI), 68–88 (VVLLLFALFGNYIFGYFGITI), 133–153 (VPLAIPLISGPGAITTTMILI), 163–183 (GVVVLSILSAMLVSGIILSLT), and 201–221 (IMGLLLVAISVQIIFTGIVGL).

This sequence belongs to the UPF0056 (MarC) family.

Its subcellular location is the cell membrane. The protein is UPF0056 membrane protein MJ0972 of Methanocaldococcus jannaschii (strain ATCC 43067 / DSM 2661 / JAL-1 / JCM 10045 / NBRC 100440) (Methanococcus jannaschii).